The following is a 709-amino-acid chain: Dual specificity calcium/calmodulin-dependent 3',5'-cyclic nucleotide phosphodiesterase 1C (709 aa).

Residue methionine 1 is modified to N-acetylmethionine. Positions 123 to 146 (EKPRFKSIVHAVQAGIFVERMYRR) are calmodulin-binding. The region spanning 151–528 (VGLSYPPAVI…ERWRAKVPKE (378 aa)) is the PDEase domain. Histidine 228 acts as the Proton donor in catalysis. Histidine 232, histidine 268, aspartate 269, and aspartate 376 together coordinate Zn(2+). A Mg(2+)-binding site is contributed by aspartate 269. 2 disordered regions span residues 453-495 (LIDE…APIN) and 523-650 (AKVP…TCRL). A compositionally biased stretch (polar residues) spans 483–495 (VKTSGSEGSAPIN). Over residues 523–556 (AKVPKEEKAKKEAEEKARLAAEEQQKEMEAKSQA) the composition is skewed to basic and acidic residues. Residues 571 to 581 (ETKNQVNGTRA) show a composition bias toward polar residues. Basic and acidic residues-rich tracts occupy residues 582 to 598 (NKSD…EKSS) and 606 to 633 (DFKD…DGTK).

It belongs to the cyclic nucleotide phosphodiesterase family. PDE1 subfamily. As to quaternary structure, homodimer. Zn(2+) serves as cofactor. Mg(2+) is required as a cofactor. As to expression, isoform PDE1C2 is present in the heart and brain and, at lower levels in the lung, liver, kidney and skeletal muscle. Isoform PDE1C1 is expressed in the heart and brain and, at lower levels in lung. Also expressed at low levels in uterus and testis.

The protein localises to the lysosome. It carries out the reaction a nucleoside 3',5'-cyclic phosphate + H2O = a nucleoside 5'-phosphate + H(+). The catalysed reaction is 3',5'-cyclic GMP + H2O = GMP + H(+). It catalyses the reaction 3',5'-cyclic AMP + H2O = AMP + H(+). Its activity is regulated as follows. Type I PDE are activated by the binding of calmodulin in the presence of Ca(2+). Calmodulin-dependent cyclic nucleotide phosphodiesterase with a dual specificity for the second messengers cAMP and cGMP, which are key regulators of many important physiological processes. Has a high affinity for both cAMP and cGMP. Modulates the amplitude and duration of the cAMP signal in sensory cilia in response to odorant stimulation, hence contributing to the generation of action potentials. Regulates smooth muscle cell proliferation. Regulates the stability of growth factor receptors, including PDGFRB. The polypeptide is Dual specificity calcium/calmodulin-dependent 3',5'-cyclic nucleotide phosphodiesterase 1C (Homo sapiens (Human)).